The following is a 742-amino-acid chain: Phosphatidylinositol 4-phosphate 5-kinase its3 (742 aa).

Disordered regions lie at residues 1-21 (MKID…IPSY) and 82-228 (LFKE…PDIG). Low complexity-rich tracts occupy residues 90 to 105 (PSNP…SNDS) and 129 to 142 (PSSN…LQNL). Polar residues-rich tracts occupy residues 158 to 181 (RSSS…SSSQ) and 193 to 218 (EKNS…TSGS). The region spanning 264 to 662 (GHENYVTAYN…RFYKFVESSI (399 aa)) is the PIPK domain. The tract at residues 677-742 (QDGQRVNKQQ…RNVTTNTSSS (66 aa)) is disordered. The segment covering 680-719 (QRVNKQQSVNAGNVRTNNKHGSLNNNTAPSSRNAKSTSAH) has biased composition (polar residues).

As to quaternary structure, interacts with opy1 (via domain PH 1); the interaction is direct but opy1 does not appear to regulate its3 localization or function. Post-translationally, phosphorylated by casein kinase I. Phosphorylation inactivates the enzyme.

The protein resides in the cell membrane. The catalysed reaction is a 1,2-diacyl-sn-glycero-3-phospho-(1D-myo-inositol 4-phosphate) + ATP = a 1,2-diacyl-sn-glycero-3-phospho-(1D-myo-inositol-4,5-bisphosphate) + ADP + H(+). Catalyzes the phosphorylation of phosphatidylinositol 4-phosphate on the fifth hydroxyl of the myo-inositol ring, to form phosphatidylinositol 4,5-bisphosphate. Involved, together with the calcineurin ppb1, in cytokinesis. This is Phosphatidylinositol 4-phosphate 5-kinase its3 (its3) from Schizosaccharomyces pombe (strain 972 / ATCC 24843) (Fission yeast).